The chain runs to 357 residues: Queuosine-tRNA galactosyltransferase (357 aa).

This sequence belongs to the glycosyltransferase 2 family.

Its subcellular location is the cytoplasm. It carries out the reaction queuosine(34) in tRNA(Tyr) + UDP-alpha-D-galactose = O-5''-beta-D-galactosylqueuosine(34) in tRNA(Tyr) + UDP + H(+). In terms of biological role, glycosyltransferase that specifically catalyzes galactosylation of cytoplasmic tRNA(Tyr) modified with queuosine at position 34 (queuosine(34)). Galactosylates the cyclopentene hydroxyl group of queuosine(34) in tRNA(Tyr) to form galactosyl-queuosine(34). Mannosylation of queuosine(34) in tRNA(Tyr) is required to slow-down elongation at cognate codons UAC and suppress stop codon readthrough, thereby regulating protein translation. The protein is Queuosine-tRNA galactosyltransferase of Rattus norvegicus (Rat).